Here is a 458-residue protein sequence, read N- to C-terminus: Tissue-resident T-cell transcription regulator protein ZNF683 (458 aa).

Disordered regions lie at residues 84 to 109 (PQDLGEDASNMRHQPPSLYKASTDSE) and 249 to 275 (TLHSQVESRSSRDTRTPGQAGVAAPTR). 3 C2H2-type zinc fingers span residues 301–323 (YECNVCGKNFGQLSNLKVHLRVH), 329–351 (FQCALCQKRFTQLAHLQKHHLVH), and 357–379 (HQCQVCHKRFSSSSNLKTHLRLH).

This sequence belongs to the krueppel C2H2-type zinc-finger protein family. In terms of tissue distribution, expressed in tissue-resident memory T (Trm) cell population in non-lymphoid organs, such as skin and gut. Expressed in innate lymphocytes, including tissue-resident natural killer (trNK) and natural killer T (NKT) cells in thymus, spleen and liver.

It is found in the nucleus. Functionally, transcription factor that mediates a transcriptional program in various innate and adaptive immune tissue-resident lymphocyte T-cell types such as tissue-resident memory T (Trm), natural killer (trNK) and natural killer T (NKT) cells and negatively regulates gene expression of proteins that promote the egress of tissue-resident T-cell populations from non-lymphoid organs. Plays a role in the development, retention and long-term establishment of adaptive and innate tissue-resident lymphocyte T-cell types in non-lymphoid organs, such as the skin and gut, but also in other nonbarrier tissues like liver and kidney, and therefore may provide immediate immunological protection against reactivating infections or viral reinfection. Also plays a role in the differentiation of both thymic and peripheral NKT cells. Negatively regulates the accumulation of interferon-gamma (IFN-gamma) in NKT cells at steady state or after antigenic stimulation. Positively regulates granzyme B production in NKT cells after innate stimulation. Associates with the transcriptional repressor PRDM1/BLIMP1 to chromatin at gene promoter regions. This is Tissue-resident T-cell transcription regulator protein ZNF683 from Mus musculus (Mouse).